Consider the following 256-residue polypeptide: Thiazole synthase (256 aa).

Lysine 95 (schiff-base intermediate with DXP) is an active-site residue. Residues glycine 156, 182-183 (AG), and 204-205 (NT) each bind 1-deoxy-D-xylulose 5-phosphate.

The protein belongs to the ThiG family. In terms of assembly, homotetramer. Forms heterodimers with either ThiH or ThiS.

The protein resides in the cytoplasm. The catalysed reaction is [ThiS sulfur-carrier protein]-C-terminal-Gly-aminoethanethioate + 2-iminoacetate + 1-deoxy-D-xylulose 5-phosphate = [ThiS sulfur-carrier protein]-C-terminal Gly-Gly + 2-[(2R,5Z)-2-carboxy-4-methylthiazol-5(2H)-ylidene]ethyl phosphate + 2 H2O + H(+). It participates in cofactor biosynthesis; thiamine diphosphate biosynthesis. Its function is as follows. Catalyzes the rearrangement of 1-deoxy-D-xylulose 5-phosphate (DXP) to produce the thiazole phosphate moiety of thiamine. Sulfur is provided by the thiocarboxylate moiety of the carrier protein ThiS. In vitro, sulfur can be provided by H(2)S. The polypeptide is Thiazole synthase (Escherichia coli O127:H6 (strain E2348/69 / EPEC)).